The chain runs to 509 residues: Maturase K (509 aa).

It belongs to the intron maturase 2 family. MatK subfamily.

It localises to the plastid. Its subcellular location is the chloroplast. Functionally, usually encoded in the trnK tRNA gene intron. Probably assists in splicing its own and other chloroplast group II introns. This Eucommia ulmoides (Hardy rubber tree) protein is Maturase K.